A 243-amino-acid polypeptide reads, in one-letter code: Glycerophosphodiester phosphodiesterase (243 aa).

The 237-residue stretch at 3 to 239 folds into the GP-PDE domain; sequence TLVIAHRGDS…DDPETLINLV (237 aa). His8 acts as the Proton acceptor in catalysis. Residues Glu35 and Asp37 each contribute to the Ca(2+) site. Residue His50 is the Proton donor of the active site. Residue Glu110 participates in Ca(2+) binding.

The protein belongs to the glycerophosphoryl diester phosphodiesterase family. In terms of assembly, homodimer. Requires Mg(2+) as cofactor. Ca(2+) is required as a cofactor.

The catalysed reaction is a sn-glycero-3-phosphodiester + H2O = an alcohol + sn-glycerol 3-phosphate + H(+). The enzyme catalyses sn-glycerol 3-phosphocholine + H2O = sn-glycerol 3-phosphate + choline + H(+). Inhibited by EDTA. Glycerophosphodiester phosphodiesterase hydrolyzes glycerophosphodiesters into glycerol-3-phosphate (G3P) and the corresponding alcohol. Can use glycerophosphocholine. This chain is Glycerophosphodiester phosphodiesterase, found in Caldanaerobacter subterraneus subsp. tengcongensis (strain DSM 15242 / JCM 11007 / NBRC 100824 / MB4) (Thermoanaerobacter tengcongensis).